A 436-amino-acid chain; its full sequence is GTPase Der (436 aa).

2 EngA-type G domains span residues 4–167 and 176–351; these read PVVA…KNIP and VQFC…ENHS. Residues 10-17, 57-61, 119-122, 182-189, 229-233, and 294-297 each bind GTP; these read GRPNVGKS, DTGGI, NKLD, DTAGM, and NKWD. Positions 352 to 436 constitute a KH-like domain; the sequence is LRVQTNVLND…PIKIFARARK (85 aa).

Belongs to the TRAFAC class TrmE-Era-EngA-EngB-Septin-like GTPase superfamily. EngA (Der) GTPase family. Associates with the 50S ribosomal subunit.

Its function is as follows. GTPase that plays an essential role in the late steps of ribosome biogenesis. The sequence is that of GTPase Der from Bacillus velezensis (strain DSM 23117 / BGSC 10A6 / LMG 26770 / FZB42) (Bacillus amyloliquefaciens subsp. plantarum).